Reading from the N-terminus, the 90-residue chain is uncharacterized protein (90 aa).

The protein resides in the mitochondrion. This is an uncharacterized protein from Ascobolus immersus.